We begin with the raw amino-acid sequence, 168 residues long: D-aminoacyl-tRNA deacylase 2 (168 aa).

A Gly-transPro motif, allows the protein to recognize chirality of D-amino acids motif is present at residues 160-161 (GP).

It belongs to the DTD family. As to quaternary structure, homodimer.

The protein localises to the cytoplasm. The catalysed reaction is a D-aminoacyl-tRNA + H2O = a tRNA + a D-alpha-amino acid + H(+). It catalyses the reaction glycyl-tRNA(Ala) + H2O = tRNA(Ala) + glycine + H(+). The enzyme catalyses D-tyrosyl-tRNA(Tyr) + H2O = D-tyrosine + tRNA(Tyr). It carries out the reaction L-alanyl-tRNA(Thr) + H2O = tRNA(Thr) + L-alanine + H(+). Functionally, deacylates mischarged D-aminoacyl-tRNAs. Also deacylates mischarged glycyl-tRNA(Ala), protecting cells against glycine mischarging by AlaRS. Probably acts by rejecting L-amino acids from its binding site rather than specific recognition of D-amino acids. Catalyzes the hydrolysis of D-tyrosyl-tRNA(Tyr), has no activity on correctly charged L-tyrosyl-tRNA(Tyr). By recycling D-aminoacyl-tRNA to D-amino acids and free tRNA molecules, this enzyme counteracts the toxicity associated with the formation of D-aminoacyl-tRNA entities in vivo and helps enforce protein L-homochirality. In contrast to DTD1, deacylates L-Ala mischarged on tRNA(Thr)(G4.U69) by alanine-tRNA ligase AARS. Can deacylate L-Ala due to a relaxed specificity for substrate chirality caused by the trans conformation of the Gly-Pro motif in the active site. Also hydrolyzes correctly charged, achiral, glycyl-tRNA(Gly) in vitro, although in vivo EEF1A1/EF-Tu may protect cognate achiral glycyl-tRNA(Gly) from DTD2-mediated deacetylation. The polypeptide is D-aminoacyl-tRNA deacylase 2 (DTD2) (Homo sapiens (Human)).